Here is a 151-residue protein sequence, read N- to C-terminus: Putative pre-16S rRNA nuclease (151 aa).

Belongs to the YqgF nuclease family.

The protein localises to the cytoplasm. Could be a nuclease involved in processing of the 5'-end of pre-16S rRNA. The polypeptide is Putative pre-16S rRNA nuclease (Chlamydia pneumoniae (Chlamydophila pneumoniae)).